Consider the following 290-residue polypeptide: 6-carboxyhexanoate--CoA ligase (290 aa).

The protein belongs to the BioW family. In terms of assembly, homodimer. Requires Mg(2+) as cofactor.

It carries out the reaction heptanedioate + ATP + CoA = 6-carboxyhexanoyl-CoA + AMP + diphosphate. It participates in metabolic intermediate metabolism; pimeloyl-CoA biosynthesis; pimeloyl-CoA from pimelate: step 1/1. Catalyzes the transformation of pimelate into pimeloyl-CoA with concomitant hydrolysis of ATP to AMP. This chain is 6-carboxyhexanoate--CoA ligase, found in Bacillus amyloliquefaciens (Bacillus velezensis).